The primary structure comprises 453 residues: Indoleamine 2,3-dioxygenase (453 aa).

Heme is bound at residue H331.

Belongs to the indoleamine 2,3-dioxygenase family. It depends on heme as a cofactor.

It catalyses the reaction D-tryptophan + O2 = N-formyl-D-kynurenine. It carries out the reaction L-tryptophan + O2 = N-formyl-L-kynurenine. The protein operates within cofactor biosynthesis; NAD(+) biosynthesis. In terms of biological role, catalyzes the first step in tryptophan catabolism in order to supply de novo nicotinamide adenine dinucleotide (NAD(+)) via the kynurenine pathway. Plays a role in the cellular response to telomere uncapping. The polypeptide is Indoleamine 2,3-dioxygenase (BNA2) (Saccharomyces cerevisiae (strain ATCC 204508 / S288c) (Baker's yeast)).